The sequence spans 249 residues: Microvitellogenin (249 aa).

Residues 1-17 (MLRTTVVLLTLAAIAFA) form the signal peptide.

Its function is as follows. Small vitellogenic protein found in females. It is synthesized in the fat body, secreted into the hemolymph, and taken up by developing oocytes. The chain is Microvitellogenin (MVG) from Manduca sexta (Tobacco hawkmoth).